The sequence spans 355 residues: MGCTVSAEDKAAAERSKMIDKNLREDGEKAAREVKLLLLGAGESGKSTIVKQMKIIHEDGYSEEECRQYRAVVYSNTIQSIMAIVKAMGNLQIDFADPLRADDARQLFALSCTAEEQGMLPEDLSGVIRRLWADHGVQACFSRSREYQLNDSAAYYLNDLDRIAQSDYIPTQQDVLRTRVKTTGIVETHFTFKDLHFKMFDVGGQRSERKKWIHCFEGVTAIIFCVALSAYDLVLAEDEEMNRMHESMKLFDSICNNKWFTDTSIILFLNKKDLFEEKITHSPLTICFPEYTGANKYDEAASYIQSKFEDLNKRKDTKEIYTHFTCATDTKNVQFVFDAVTDVIIKNNLKDCGLF.

Gly2 carries the N-myristoyl glycine lipid modification. Cys3 is lipidated: S-palmitoyl cysteine. In terms of domain architecture, G-alpha spans 32 to 355 (REVKLLLLGA…KNNLKDCGLF (324 aa)). Positions 35-48 (KLLLLGAGESGKST) are G1 motif. GTP-binding positions include 40 to 47 (GAGESGKS), 176 to 182 (LRTRVKT), 201 to 205 (DVGGQ), 270 to 273 (NKKD), and Ala327. 2 residues coordinate Mg(2+): Ser47 and Thr182. The interval 174 to 182 (DVLRTRVKT) is G2 motif. The tract at residues 197-206 (FKMFDVGGQR) is G3 motif. The interval 266-273 (ILFLNKKD) is G4 motif. The segment at 325-330 (TCATDT) is G5 motif.

This sequence belongs to the G-alpha family. G(i/o/t/z) subfamily. As to quaternary structure, g proteins are composed of 3 units; alpha, beta and gamma. The alpha chain contains the guanine nucleotide binding site. In this context, interacts with GNB2. Interacts with UNC5B. Interacts with GPSM1. Interacts with RGS12 and RGS14. Interacts (inactive GDP-bound form) with NUCB1 (via GBA motif); the interaction leads to activation of GNAI3. Interacts (inactive GDP-bound form) with CCDC88C/DAPLE (via GBA motif). Interacts (inactive GDP-bound form) with CCDC8A/GIV (via GBA motif). As to expression, ubiquitously expressed. Most abundant in the lung and in the spleen.

The protein resides in the cytoplasm. It is found in the cytoskeleton. It localises to the microtubule organizing center. The protein localises to the centrosome. Its subcellular location is the cell membrane. The protein resides in the membrane. Its function is as follows. Guanine nucleotide-binding proteins (G proteins) are involved as modulators or transducers in various transmembrane signaling systems. The G(i) proteins are involved in hormonal regulation of adenylate cyclase: they inhibit the cyclase in response to beta-adrenergic stimuli. May play a role in cell division. In Cavia porcellus (Guinea pig), this protein is Guanine nucleotide-binding protein G(i) subunit alpha-2 (GNAI2).